Here is a 198-residue protein sequence, read N- to C-terminus: ATP-dependent Clp protease proteolytic subunit 1 (198 aa).

Ser-98 (nucleophile) is an active-site residue. Residue His-123 is part of the active site.

It belongs to the peptidase S14 family. Fourteen ClpP subunits assemble into 2 heptameric rings which stack back to back to give a disk-like structure with a central cavity, resembling the structure of eukaryotic proteasomes.

It is found in the cytoplasm. The catalysed reaction is Hydrolysis of proteins to small peptides in the presence of ATP and magnesium. alpha-casein is the usual test substrate. In the absence of ATP, only oligopeptides shorter than five residues are hydrolyzed (such as succinyl-Leu-Tyr-|-NHMec, and Leu-Tyr-Leu-|-Tyr-Trp, in which cleavage of the -Tyr-|-Leu- and -Tyr-|-Trp bonds also occurs).. Functionally, cleaves peptides in various proteins in a process that requires ATP hydrolysis. Has a chymotrypsin-like activity. Plays a major role in the degradation of misfolded proteins. ClpXP1 is involved in the complete degradation of the Site-2 clipped anti-sigma-W factor RsiW. This results in the release of SigW and the transcription activation of the genes under the control of the sigma-W factor. This Bacillus licheniformis (strain ATCC 14580 / DSM 13 / JCM 2505 / CCUG 7422 / NBRC 12200 / NCIMB 9375 / NCTC 10341 / NRRL NRS-1264 / Gibson 46) protein is ATP-dependent Clp protease proteolytic subunit 1.